A 73-amino-acid polypeptide reads, in one-letter code: Alpha-amylase inhibitor Paim-1 (73 aa).

Cystine bridges form between Cys8–Cys24 and Cys42–Cys70.

In terms of biological role, inhibits mammalian alpha-amylases specifically but has no action on plant and microbial alpha-amylases. The sequence is that of Alpha-amylase inhibitor Paim-1 from Streptomyces olivaceoviridis (Streptomyces corchorusii).